The primary structure comprises 1184 residues: MKKYRKISIGCFAMATQTSHVFHGQENMFLENHCIRRNTGRDSKKPLKQKNMNGLGQNSDNGLLVTHVNQTQDLLRLQGSETQSSDWEDSEDWLSAHSLKCQKLTLADLISQGTEVLEEGTNVVQKICFSTQIIRHFESKLSDTIEVYQERIQWLTENSKKAFGLIKGARVSILIDVSAISSGPQKEEFQKDLMSLIDEQLSHKEKLFVLSFGTNAGSLWPDPMEVSASTLQELKLWVKTLQPDGGSNLLQALKKIFTLKGLDSLVAIMRSCPDQPSEILSDYIQQSTMGRDLIIHFITYRCDDQMPPAVLKNLAEAVRGYYHCYSPKMEHYTSRDMDELLAEIQKAQSLLSHVQALQHSSPCEALTCTMEEISTEITNGPLISLLPKPPKHDAPLTIEFPNLDKTSAEWLKVNGLKAKKLSLYQVLAPNAFSPVEEFVPILQKTVSSTIHEKAMIQFEWHDGTVKNIHVDPPFLYKYQQQLSRAMRMYERRIEWLSLASRRIWGTVCEKRVVVLLDISATNSMYIIHIQHSLRLLLEEQLSNKDCFNLIAFGSTIESWRPEMVPVSHNNLQSAWRWALNLRCRGSRNVLSALRKAVEVDFKDKDKHQSQGIYLFTGGIPDQDMPTLSAYMAEACGGCDLQLNVCLFYVGEPKMDTTPPARYASHTDTAAAYKEVTRAAGGRFHWFGDTGIYESDDINSIMSEMEKALNYSQKCAFLMASLKNHSGKVLGSSALPKEKPKTLQLRSQPKKLCPPRPTVPLGARMSIKDDPDREKSPPLKSLKWRPLSSRVGISPAAAQPTKEGMMELRRKTKSREAETSLLLFYTEKGNDVGSVYKKYPQGRGLRRTSSSIDLPRKDTVCSSQEWVAKYGLKKLKLEISRCMGPNCTHQKSGQRSASAKHCSIFPSVEIHGVVRHIQWTPREMEVYIRHLEKVLRRYVQRLQWLLSGSRRLFGTVLESKVCILLDTSGSMGPYLQQVKTELVLLIWEQLRKCCDSFNLLSFAESFQSWQDTLVETTDAACHEAMQWVTHLQAQGSTSILQALLKAFSFHDLEGLYLLTDGKPDTSCSLVLNEVQKLREKRDVKVHTISLNCSDRAAVEFLRKLASFTGGRYHCPVGEDTLSKIHSLLTKGFINEKDPTLPPFEGDDLRILAQEITKARSFLWQAQSFRSQLQKKNDAEPKVTLS.

The signal sequence occupies residues Met-1–Gly-24. The interval Gly-40–Gly-62 is disordered. Positions Lys-50–Gly-62 are enriched in polar residues. Positions Thr-333–Leu-357 form a coiled coil. Residues Arg-511 to Leu-708 form the VWFA 1 domain. Residue Asn-709 is glycosylated (N-linked (GlcNAc...) asparagine). Positions Leu-729 to Ser-780 are disordered. Basic and acidic residues predominate over residues Ser-765–Pro-776. A VWFA 2 domain is found at Lys-959–Phe-1131.

Its subcellular location is the secreted. The chain is von Willebrand factor A domain-containing protein 3A (VWA3A) from Homo sapiens (Human).